Reading from the N-terminus, the 88-residue chain is MSEVKVYRVKGEMLISHDRYPEWRKFEVYVRALKREHALEKVYSDLGSRHKLRRKHIRIRSVEEVDPGEVEDLNIIRLASLERFVKTG.

This sequence belongs to the eukaryotic ribosomal protein eL20 family. As to quaternary structure, part of the 50S ribosomal subunit. Binds 23S rRNA.

This Aeropyrum pernix (strain ATCC 700893 / DSM 11879 / JCM 9820 / NBRC 100138 / K1) protein is Large ribosomal subunit protein eL20.